Here is a 242-residue protein sequence, read N- to C-terminus: Methylthioribulose-1-phosphate dehydratase (242 aa).

Residues 1-23 are disordered; that stretch reads MTDQREEPQGSNDHLVRSSDPEH. A substrate-binding site is contributed by Cys102. Residues His119 and His121 each contribute to the Zn(2+) site. The active-site Proton donor/acceptor is the Glu148. His204 serves as a coordination point for Zn(2+).

This sequence belongs to the aldolase class II family. MtnB subfamily. The cofactor is Zn(2+).

The protein localises to the cytoplasm. It carries out the reaction 5-(methylsulfanyl)-D-ribulose 1-phosphate = 5-methylsulfanyl-2,3-dioxopentyl phosphate + H2O. The protein operates within amino-acid biosynthesis; L-methionine biosynthesis via salvage pathway; L-methionine from S-methyl-5-thio-alpha-D-ribose 1-phosphate: step 2/6. Catalyzes the dehydration of methylthioribulose-1-phosphate (MTRu-1-P) into 2,3-diketo-5-methylthiopentyl-1-phosphate (DK-MTP-1-P). This is Methylthioribulose-1-phosphate dehydratase from Uncinocarpus reesii (strain UAMH 1704).